An 80-amino-acid polypeptide reads, in one-letter code: Putative membrane protein insertion efficiency factor (80 aa).

This sequence belongs to the UPF0161 family.

The protein resides in the cell membrane. In terms of biological role, could be involved in insertion of integral membrane proteins into the membrane. In Limosilactobacillus fermentum (strain NBRC 3956 / LMG 18251) (Lactobacillus fermentum), this protein is Putative membrane protein insertion efficiency factor.